The following is a 412-amino-acid chain: 5,5'-dehydrodivanillate O-demethylase ferredoxin reductase subunit (412 aa).

Positions 14, 49, 82, 130, 279, and 298 each coordinate FAD.

Belongs to the FAD-dependent oxidoreductase family. In terms of assembly, monomer. The three-component monooxygenase is composed of an oxygenase (LigXa), a ferredoxin (LigXc) and a ferredoxin reductase (LigXd). It depends on FAD as a cofactor.

It catalyses the reaction 5,5'-dehydrodivanillate + NADH + O2 + H(+) = 2,2',3-trihydroxy-3'-methoxy-5,5'-dicarboxybiphenyl + formaldehyde + NAD(+) + H2O. Functionally, involved in the catabolism of 5,5'-dehydrodivanillate (DDVA), an intermediate in the biodegradation of lignin. Part of a three-component monooxygenase that catalyzes the O-demethylation of DDVA, leading to the formation of 2,2',3-trihydroxy-3'-methoxy-5,5'-dicarboxybiphenyl (OH-DDVA). LigXd probably transfers the electrons from NADH to LigXc. This Sphingobium sp. (strain NBRC 103272 / SYK-6) protein is 5,5'-dehydrodivanillate O-demethylase ferredoxin reductase subunit.